The chain runs to 154 residues: Prefoldin subunit 2 (154 aa).

Residues 1–18 (MAENGGRAGKSSGSGTGK) show a composition bias toward gly residues. 2 disordered regions span residues 1-20 (MAENGGRAGKSSGSGTGKGA) and 124-154 (IRLMGEDEKPAAKENSEGAGAKASSAGVLVS). The span at 124–139 (IRLMGEDEKPAAKENS) shows a compositional bias: basic and acidic residues. Residues 140-154 (EGAGAKASSAGVLVS) are compositionally biased toward low complexity.

It belongs to the prefoldin subunit beta family. In terms of assembly, heterohexamer of two PFD-alpha type and four PFD-beta type subunits. Component of the PAQosome complex which is responsible for the biogenesis of several protein complexes and which consists of R2TP complex members RUVBL1, RUVBL2, RPAP3 and PIH1D1, URI complex members PFDN2, PFDN6, PDRG1, UXT and URI1 as well as ASDURF, POLR2E and DNAAF10/WDR92. Interacts with URI1; the interaction is phosphorylation-dependent and occurs in a growth-dependent manner.

The protein resides in the nucleus. It localises to the cytoplasm. Its subcellular location is the mitochondrion. Its function is as follows. Binds specifically to cytosolic chaperonin (c-CPN) and transfers target proteins to it. Binds to nascent polypeptide chain and promotes folding in an environment in which there are many competing pathways for nonnative proteins. In Bos taurus (Bovine), this protein is Prefoldin subunit 2 (PFDN2).